Reading from the N-terminus, the 709-residue chain is Polyribonucleotide nucleotidyltransferase (709 aa).

2 residues coordinate Mg(2+): Asp485 and Asp491. Positions 552–611 (PRIYTMKIDPKKIKDVIGKGGATIRSLTEETGTSIDIDDDGTVKIAAVDSNAAKNVMGRI) constitute a KH domain. The region spanning 621–689 (GAIYKGKVTR…RQGRIRLTMK (69 aa)) is the S1 motif domain.

Belongs to the polyribonucleotide nucleotidyltransferase family. As to quaternary structure, component of the RNA degradosome, which is a multiprotein complex involved in RNA processing and mRNA degradation. Mg(2+) serves as cofactor.

Its subcellular location is the cytoplasm. The catalysed reaction is RNA(n+1) + phosphate = RNA(n) + a ribonucleoside 5'-diphosphate. Its function is as follows. Involved in mRNA degradation. Catalyzes the phosphorolysis of single-stranded polyribonucleotides processively in the 3'- to 5'-direction. The polypeptide is Polyribonucleotide nucleotidyltransferase (Haemophilus influenzae (strain PittEE)).